The primary structure comprises 398 residues: DNA-directed RNA polymerase III subunit RPC4 (398 aa).

The disordered stretch occupies residues 1 to 114 (MSEGNAAGEP…SHSIFEQGPA (114 aa)). At serine 2 the chain carries N-acetylserine. Phosphoserine is present on serine 42. A compositionally biased stretch (basic and acidic residues) spans 66–100 (KIKEEPKEEVTVKKEKRERDRDRQREGHGRGRGRP). Glycyl lysine isopeptide (Lys-Gly) (interchain with G-Cter in SUMO2) cross-links involve residues lysine 68 and lysine 78. Omega-N-methylarginine is present on residues arginine 95, arginine 97, and arginine 99. Residues lysine 141, lysine 152, lysine 160, lysine 190, lysine 199, lysine 206, lysine 220, lysine 285, lysine 302, lysine 310, and lysine 396 each participate in a glycyl lysine isopeptide (Lys-Gly) (interchain with G-Cter in SUMO2) cross-link. The interval 220 to 244 (KEEPRDEEEEAKMKAPPKAARKTPG) is disordered.

It belongs to the eukaryotic RPC4/POLR3D RNA polymerase subunit family. As to quaternary structure, component of the RNA polymerase III complex consisting of 17 subunits: a ten-subunit horseshoe-shaped catalytic core composed of POLR3A/RPC1, POLR3B/RPC2, POLR1C/RPAC1, POLR1D/RPAC2, POLR3K/RPC10, POLR2E/RPABC1, POLR2F/RPABC2, POLR2H/RPABC3, POLR2K/RPABC4 and POLR2L/RPABC5; a mobile stalk composed of two subunits POLR3H/RPC8 and CRCP/RPC9, protruding from the core and functioning primarily in transcription initiation; and additional subunits homologous to general transcription factors of the RNA polymerase II machinery, POLR3C/RPC3-POLR3F/RPC6-POLR3G/RPC7 heterotrimer required for transcription initiation and POLR3D/RPC4-POLR3E/RPC5 heterodimer involved in both transcription initiation and termination. In terms of processing, sumoylation on Lys-141 can serve as a signal to mark misfolded Pol III for proteasomal degradation.

The protein resides in the nucleus. DNA-dependent RNA polymerase catalyzes the transcription of DNA into RNA using the four ribonucleoside triphosphates as substrates. Specific peripheric component of RNA polymerase III (Pol III) which synthesizes small non-coding RNAs including 5S rRNA, snRNAs, tRNAs and miRNAs from at least 500 distinct genomic loci. Assembles with POLR3E/RPC5 forming a subcomplex that binds the Pol III core. Enables recruitment of Pol III at transcription initiation site and drives transcription initiation from both type 2 and type 3 DNA promoters. Required for efficient transcription termination and reinitiation. Pol III plays a key role in sensing and limiting infection by intracellular bacteria and DNA viruses. Acts as nuclear and cytosolic DNA sensor involved in innate immune response. Can sense non-self dsDNA that serves as template for transcription into dsRNA. The non-self RNA polymerase III transcripts, such as Epstein-Barr virus-encoded RNAs (EBERs) induce type I interferon and NF-kappa-B through the RIG-I pathway. The polypeptide is DNA-directed RNA polymerase III subunit RPC4 (Homo sapiens (Human)).